The primary structure comprises 116 residues: MMLTNRQIRVRLFESLKNSFFKKTVGISFALLFILLITAFSLIVVRFEYKLQLNEQKNLILEDTRLDEQWSQIVLEYSSLATPTAVEKFAQKEKMTLPTRKTIGFLNEQKEELNNE.

Residues 1–24 are Cytoplasmic-facing; that stretch reads MMLTNRQIRVRLFESLKNSFFKKT. Residues 25–45 form a helical membrane-spanning segment; sequence VGISFALLFILLITAFSLIVV. Over 46 to 116 the chain is Periplasmic; the sequence is RFEYKLQLNE…NEQKEELNNE (71 aa).

This sequence belongs to the FtsL family. Part of a complex composed of FtsB, FtsL and FtsQ.

It is found in the cell inner membrane. In terms of biological role, essential cell division protein. May link together the upstream cell division proteins, which are predominantly cytoplasmic, with the downstream cell division proteins, which are predominantly periplasmic. The polypeptide is Cell division protein FtsL (Francisella tularensis subsp. tularensis (strain SCHU S4 / Schu 4)).